Consider the following 1481-residue polypeptide: Cystic fibrosis transmembrane conductance regulator (1481 aa).

At 1–77 (MQRSPLEKAS…KLINALRRCF (77 aa)) the chain is on the cytoplasmic side. The helical transmembrane segment at 78–98 (FWRFMFYGILLYLGEVTKAVQ) threads the bilayer. The region spanning 81–365 (FMFYGILLYL…WAVQTWYDSL (285 aa)) is the ABC transmembrane type-1 1 domain. Over 99–122 (PLLLGRIIASYDPDNKEERSIAIY) the chain is Extracellular. The chain crosses the membrane as a helical span at residues 123-146 (LGIGLCLLFIVRTLLLHPAIFGLH). The Cytoplasmic segment spans residues 147–195 (HIGMQMRIAMFSLIYKKTLKLSSRVLDKISIGQLVSLLSNNLNKFDEGL). Residues 196 to 216 (ALAHFVWIVPLQVALLMGLIW) form a helical membrane-spanning segment. Residues 217–222 (ELLQAS) are Extracellular-facing. A helical membrane pass occupies residues 223 to 243 (AFCGLGFLIVLALFQAGLGRM). Over 244–298 (MMKYRDQRAGKINERLVITSEMIENIQSVKAYCWEEAMEKMIENLRQTELKLTRK) the chain is Cytoplasmic. The helical transmembrane segment at 299–319 (AAYVRYFNSSAFFFSGFFVVF) threads the bilayer. At 320-339 (LSVLPYALIKGIVLRKIFTT) the chain is on the extracellular side. A helical membrane pass occupies residues 340-358 (ISFCIVLRMAVTRQFPWAV). Topologically, residues 359–858 (QTWYDSLGAI…YLRYITVHKS (500 aa)) are cytoplasmic. ATP-binding positions include tryptophan 401, serine 434, 458-465 (GSTGAGKT), and glutamine 493. One can recognise an ABC transporter 1 domain in the interval 423 to 646 (NDDDSLFFSN…RPDFSSKLMG (224 aa)). Residue cysteine 524 is the site of S-palmitoyl cysteine attachment. 2 positions are modified to phosphoserine: serine 549 and serine 660. The tract at residues 654-831 (SAERRNSILT…EEINEEDLKE (178 aa)) is disordered R region. The residue at position 670 (serine 670) is a Phosphoserine; by PKA. Serine 686 carries the post-translational modification Phosphoserine. Lysine 688 is covalently cross-linked (Glycyl lysine isopeptide (Lys-Gly) (interchain with G-Cter in ubiquitin)). Serine 700 and serine 712 each carry phosphoserine. Threonine 717 bears the Phosphothreonine mark. Serine 737, serine 753, serine 768, serine 790, serine 795, and serine 813 each carry phosphoserine. The chain crosses the membrane as a helical span at residues 859 to 879 (LIFVLIWCLVIFLAEVAASLV). Residues 859 to 1155 (LIFVLIWCLV…AVNSSIDVDS (297 aa)) enclose the ABC transmembrane type-1 2 domain. Topologically, residues 880 to 918 (VLWFLGNTPPQDKGNSTYSRNNSYAVIITRTSSYYVFYI) are extracellular. 2 N-linked (GlcNAc...) asparagine glycosylation sites follow: asparagine 894 and asparagine 900. The discontinuously helical transmembrane segment at 919–939 (YVGVADTLLAMGFFRGLPLVH) threads the bilayer. Residues 940–990 (TLITVSKILHHKMLHSVLQAPMSTLNTLKAGGILNRFSKDIAILDDLLPLT) are Cytoplasmic-facing. Residues 991 to 1011 (IFDFIQLLLIVIGAIAVVAVL) traverse the membrane as a helical segment. The Extracellular portion of the chain corresponds to 1012–1013 (QP). Residues 1014–1034 (YIFVATVPVIVAFIMLRAYFL) traverse the membrane as a helical segment. Residues 1035 to 1095 (QTSQQLKQLE…TANWFLYLST (61 aa)) lie on the Cytoplasmic side of the membrane. A helical membrane pass occupies residues 1096 to 1116 (LRWFQMRIEMIFVIFFIAVTF). The Extracellular segment spans residues 1117-1130 (ISILTTGEGEGTVG). The helical transmembrane segment at 1131-1151 (IILTLAMNIMSTLQWAVNSSI) threads the bilayer. Residues 1152 to 1481 (DVDSLMRSVS…TEEEVQDTRL (330 aa)) lie on the Cytoplasmic side of the membrane. One can recognise an ABC transporter 2 domain in the interval 1211–1444 (MTVKDLTAKY…RSLFRQAISP (234 aa)). Residues tyrosine 1220 and 1245-1252 (GRTGSGKS) each bind ATP. Residues 1387–1481 (RTLKQAFADC…TEEEVQDTRL (95 aa)) are interaction with GORASP2. Residue cysteine 1396 is the site of S-palmitoyl cysteine attachment. Residues serine 1445 and serine 1457 each carry the phosphoserine modification. Residues 1462–1481 (QPQIAALKEETEEEVQDTRL) are disordered. The segment covering 1471-1481 (ETEEEVQDTRL) has biased composition (acidic residues). A PDZ-binding motif is present at residues 1479–1481 (TRL).

This sequence belongs to the ABC transporter superfamily. ABCC family. CFTR transporter (TC 3.A.1.202) subfamily. Monomer; does not require oligomerization for channel activity. May form oligomers in the membrane. Interacts with SLC26A3, SLC26A6 and NHERF1. Interacts with SHANK2. Interacts with MYO6. Interacts (via C-terminus) with GOPC (via PDZ domain); this promotes CFTR internalization and thereby decreases channel activity. Interacts with SLC4A7 through NHERF1. Found in a complex with MYO5B and RAB11A. Interacts with ANO1. Interacts with SLC26A8. Interacts with AHCYL1; the interaction increases CFTR activity. Interacts with CSE1L. The core-glycosylated form interacts with GORASP2 (via PDZ GRASP-type 1 domain) in respone to ER stress. Interacts with MARCHF2; the interaction leads to CFTR ubiqtuitination and degradation. Interacts with ADGRG2. Post-translationally, N-glycosylated. Phosphorylated; cAMP treatment promotes phosphorylation and activates the channel. Dephosphorylation decreases the ATPase activity (in vitro). Phosphorylation at PKA sites activates the channel. Phosphorylation at PKC sites enhances the response to phosphorylation by PKA. Phosphorylated by AMPK; this inhibits channel activity. In terms of processing, ubiquitinated, leading to its degradation in the lysosome. Deubiquitination by USP10 in early endosomes enhances its endocytic recycling to the cell membrane. Ubiquitinated by RNF185 during ER stress. Ubiquitinated by MARCHF2.

The protein localises to the apical cell membrane. It localises to the early endosome membrane. The protein resides in the cell membrane. It is found in the recycling endosome membrane. Its subcellular location is the endoplasmic reticulum membrane. The protein localises to the nucleus. It carries out the reaction ATP + H2O + closed Cl(-) channel = ADP + phosphate + open Cl(-) channel.. The enzyme catalyses chloride(in) = chloride(out). It catalyses the reaction hydrogencarbonate(in) = hydrogencarbonate(out). The catalysed reaction is ATP + H2O = ADP + phosphate + H(+). Functionally, epithelial ion channel that plays an important role in the regulation of epithelial ion and water transport and fluid homeostasis. Mediates the transport of chloride ions across the cell membrane. Possesses an intrinsic ATPase activity and utilizes ATP to gate its channel; the passive flow of anions through the channel is gated by cycles of ATP binding and hydrolysis by the ATP-binding domains. The ion channel is also permeable to HCO(3)(-); selectivity depends on the extracellular chloride concentration. Exerts its function also by modulating the activity of other ion channels and transporters. Contributes to the regulation of the pH and the ion content of the epithelial fluid layer. Modulates the activity of the epithelial sodium channel (ENaC) complex, in part by regulating the cell surface expression of the ENaC complex. May regulate bicarbonate secretion and salvage in epithelial cells by regulating the transporter SLC4A7. Can inhibit the chloride channel activity of ANO1. Plays a role in the chloride and bicarbonate homeostasis during sperm epididymal maturation and capacitation. This is Cystic fibrosis transmembrane conductance regulator from Papio anubis (Olive baboon).